We begin with the raw amino-acid sequence, 196 residues long: Probable malonic semialdehyde reductase RutE (196 aa).

Belongs to the nitroreductase family. HadB/RutE subfamily. Requires FMN as cofactor.

It carries out the reaction 3-hydroxypropanoate + NADP(+) = 3-oxopropanoate + NADPH + H(+). Functionally, may reduce toxic product malonic semialdehyde to 3-hydroxypropionic acid, which is excreted. The polypeptide is Probable malonic semialdehyde reductase RutE (Shigella flexneri serotype 5b (strain 8401)).